The following is a 351-amino-acid chain: Protein RecA (351 aa).

An ATP-binding site is contributed by 67 to 74; that stretch reads GPESSGKT.

Belongs to the RecA family.

Its subcellular location is the cytoplasm. Can catalyze the hydrolysis of ATP in the presence of single-stranded DNA, the ATP-dependent uptake of single-stranded DNA by duplex DNA, and the ATP-dependent hybridization of homologous single-stranded DNAs. It interacts with LexA causing its activation and leading to its autocatalytic cleavage. In Arthrobacter sp. (strain FB24), this protein is Protein RecA.